Reading from the N-terminus, the 377-residue chain is Glutamate 5-kinase (377 aa).

Lys-17 contributes to the ATP binding site. Substrate contacts are provided by Ser-56, Asp-143, and Asn-155. ATP is bound at residue 217–223 (SGGMFSK). The region spanning 282–360 (AGDLVIDDGA…CEIESILGKC (79 aa)) is the PUA domain.

Belongs to the glutamate 5-kinase family.

It localises to the cytoplasm. It carries out the reaction L-glutamate + ATP = L-glutamyl 5-phosphate + ADP. It participates in amino-acid biosynthesis; L-proline biosynthesis; L-glutamate 5-semialdehyde from L-glutamate: step 1/2. Catalyzes the transfer of a phosphate group to glutamate to form L-glutamate 5-phosphate. This chain is Glutamate 5-kinase, found in Maridesulfovibrio salexigens (strain ATCC 14822 / DSM 2638 / NCIMB 8403 / VKM B-1763) (Desulfovibrio salexigens).